The primary structure comprises 532 residues: Protein kinase domain-containing protein ppk9 (532 aa).

Positions Trp23–Phe274 constitute a Protein kinase domain. Residues Leu29 to Val37 and Lys52 each bind ATP. The active-site Proton acceptor is Asp145. The span at Pro316–Pro346 shows a compositional bias: polar residues. Residues Pro316 to Asp349 are disordered.

It is found in the cytoplasm. The protein localises to the nucleus. Its subcellular location is the cytoskeleton. It localises to the microtubule organizing center. The protein resides in the spindle pole body. The polypeptide is Protein kinase domain-containing protein ppk9 (ppk9) (Schizosaccharomyces pombe (strain 972 / ATCC 24843) (Fission yeast)).